The primary structure comprises 159 residues: NADH-quinone oxidoreductase subunit B (159 aa).

4 residues coordinate [4Fe-4S] cluster: cysteine 36, cysteine 37, cysteine 102, and cysteine 132.

Belongs to the complex I 20 kDa subunit family. In terms of assembly, NDH-1 is composed of 14 different subunits. Subunits NuoB, C, D, E, F, and G constitute the peripheral sector of the complex. [4Fe-4S] cluster is required as a cofactor.

The protein localises to the cell inner membrane. The catalysed reaction is a quinone + NADH + 5 H(+)(in) = a quinol + NAD(+) + 4 H(+)(out). NDH-1 shuttles electrons from NADH, via FMN and iron-sulfur (Fe-S) centers, to quinones in the respiratory chain. Couples the redox reaction to proton translocation (for every two electrons transferred, four hydrogen ions are translocated across the cytoplasmic membrane), and thus conserves the redox energy in a proton gradient. The polypeptide is NADH-quinone oxidoreductase subunit B (Albidiferax ferrireducens (strain ATCC BAA-621 / DSM 15236 / T118) (Rhodoferax ferrireducens)).